The following is a 321-amino-acid chain: Thioredoxin reductase (321 aa).

Residues 11-14, 40-41, Q45, N54, C145, D288, and 295-297 each bind FAD; these read SGPA, TA, and RQA. Residues C142 and C145 are joined by a disulfide bond.

Belongs to the class-II pyridine nucleotide-disulfide oxidoreductase family. In terms of assembly, homodimer. FAD is required as a cofactor.

Its subcellular location is the cytoplasm. It carries out the reaction [thioredoxin]-dithiol + NADP(+) = [thioredoxin]-disulfide + NADPH + H(+). This is Thioredoxin reductase (TRR1) from Debaryomyces hansenii (strain ATCC 36239 / CBS 767 / BCRC 21394 / JCM 1990 / NBRC 0083 / IGC 2968) (Yeast).